The primary structure comprises 117 residues: UPF0102 protein Swoo_0351 (117 aa).

The protein belongs to the UPF0102 family.

In Shewanella woodyi (strain ATCC 51908 / MS32), this protein is UPF0102 protein Swoo_0351.